Here is a 562-residue protein sequence, read N- to C-terminus: MKALLRALIGQGIEALRANGTLPGDTLPPDFVVERPKTREHGDFATNAAMLLAKAARSNPRALAQALLTALPDSNDVTKVEIAGPGFINFHLAPTAYQREVAHVIKQGHDYGRGLAGNGRSVGVEYVSANPTGPLHVGHGRAAAIGDSLARVLDANGWNVKREFYYNDAGVQIENLALSVQARAQGLTPDSAGWPENGYRGDYIADVANAYLTGDTVDMEGHLVTGTKDPADLESIRRFAVAYLRNEQNHDLAAFRVDFDIYFLESSLYKDGKVEEAVQKLIASGHTYEEGGALWLKSTDFGDDKDRVMRKSDGTYTYFVPDVAYHLTKWQRGYERAITELGADHHGSLTRVRAGLQAMELGIPQGWPEYVLHQMVTVMRDGEEVKLGKRAGGYVTLRDLIEETSADAVRWFLIARKPDSQLTFDIDLARAQSNDNPVFYVQYAHARVCSVLRQAQEKGYKYDQVHGLAELARLDDEHSLAVMLELSRYPEVVEIAGQTLEPYQIAQYLRELAHAFHTWYHNSKVLVDDAAERDAKLTLAVATQQVLANGLELLGVSAPEKM.

The 'HIGH' region motif lies at 129–139 (ANPTGPLHVGH).

This sequence belongs to the class-I aminoacyl-tRNA synthetase family. Monomer.

Its subcellular location is the cytoplasm. The catalysed reaction is tRNA(Arg) + L-arginine + ATP = L-arginyl-tRNA(Arg) + AMP + diphosphate. This Xanthomonas oryzae pv. oryzae (strain KACC10331 / KXO85) protein is Arginine--tRNA ligase.